A 565-amino-acid polypeptide reads, in one-letter code: Probable beta-glucosidase btgE (565 aa).

Residues 1-18 form the signal peptide; that stretch reads MRGAILATAAALAGTAMA. Residues 246-304 are disordered; that stretch reads TGQDEPTSAPAAPSTTAVPATTTAAPETTTAAPDTTTAVPSTSSAAPSSSSTAPASTGA. The span at 251-304 shows a compositional bias: low complexity; it reads PTSAPAAPSTTAVPATTTAAPETTTAAPDTTTAVPSTSSAAPSSSSTAPASTGA. Catalysis depends on glutamate 405, which acts as the Proton donor. Residue glutamate 501 is the Nucleophile of the active site.

It belongs to the glycosyl hydrolase 17 family.

It is found in the secreted. The protein resides in the cell wall. The catalysed reaction is Hydrolysis of terminal, non-reducing beta-D-glucosyl residues with release of beta-D-glucose.. The protein operates within glycan metabolism; cellulose degradation. In terms of biological role, beta-glucosidases are one of a number of cellulolytic enzymes involved in the degradation of cellulosic biomass. Catalyzes the last step releasing glucose from the inhibitory cellobiose. The sequence is that of Probable beta-glucosidase btgE (btgE) from Aspergillus fumigatus (strain CBS 144.89 / FGSC A1163 / CEA10) (Neosartorya fumigata).